The primary structure comprises 440 residues: O-glycoside alpha-1,2-mannosyltransferase homolog 4 (440 aa).

Residues 1–35 are Cytoplasmic-facing; that stretch reads MLGWNKHVFFSESRINFRCLLRKKLKKRCPLSARF. Residues 36 to 56 traverse the membrane as a helical; Signal-anchor for type II membrane protein segment; sequence VLVLLLIVLIFILKMGYKQLI. Over 57-440 the chain is Lumenal; that stretch reads YKLNHPPLRR…NLIGDGFLDE (384 aa). Glutamate 336 (nucleophile) is an active-site residue.

The protein belongs to the glycosyltransferase 15 family.

Its subcellular location is the cytoplasm. It localises to the nucleus. The protein resides in the golgi apparatus membrane. Functionally, probable mannosyltransferase involved in O-glycosylation of cell wall and secreted proteins. Transfers an alpha-D-mannosyl residue from GDP-mannose into lipid-linked oligosaccharide, forming an alpha-(1-&gt;2)-D-mannosyl-D-mannose linkage. This Schizosaccharomyces pombe (strain 972 / ATCC 24843) (Fission yeast) protein is O-glycoside alpha-1,2-mannosyltransferase homolog 4 (omh4).